Consider the following 79-residue polypeptide: UPF0154 protein Lm4b_01315 (79 aa).

A helical membrane pass occupies residues 2 to 22; it reads WIYILVGIICLLAGLAGGFFI. A compositionally biased stretch (polar residues) spans 57–66; sequence KINQMMSAMN. Positions 57–79 are disordered; it reads KINQMMSAMNKQQEKEKPKKTKK.

It belongs to the UPF0154 family.

The protein resides in the cell membrane. The sequence is that of UPF0154 protein Lm4b_01315 from Listeria monocytogenes serotype 4b (strain CLIP80459).